We begin with the raw amino-acid sequence, 101 residues long: Ribonuclease kappa-B (101 aa).

2 consecutive transmembrane segments (helical) span residues 13 to 33 (ACGI…GIFF) and 68 to 88 (VGIN…VSLC).

The protein belongs to the RNase K family.

It localises to the membrane. Functionally, endoribonuclease which preferentially cleaves ApU and ApG phosphodiester bonds. In Danio rerio (Zebrafish), this protein is Ribonuclease kappa-B (rnasekb).